A 508-amino-acid chain; its full sequence is Bifunctional purine biosynthesis protein PurH (508 aa).

An MGS-like domain is found at 1 to 145 (MIKRALLSTY…KNYKDVIVVV (145 aa)).

The protein belongs to the PurH family.

The enzyme catalyses (6R)-10-formyltetrahydrofolate + 5-amino-1-(5-phospho-beta-D-ribosyl)imidazole-4-carboxamide = 5-formamido-1-(5-phospho-D-ribosyl)imidazole-4-carboxamide + (6S)-5,6,7,8-tetrahydrofolate. It catalyses the reaction IMP + H2O = 5-formamido-1-(5-phospho-D-ribosyl)imidazole-4-carboxamide. It participates in purine metabolism; IMP biosynthesis via de novo pathway; 5-formamido-1-(5-phospho-D-ribosyl)imidazole-4-carboxamide from 5-amino-1-(5-phospho-D-ribosyl)imidazole-4-carboxamide (10-formyl THF route): step 1/1. Its pathway is purine metabolism; IMP biosynthesis via de novo pathway; IMP from 5-formamido-1-(5-phospho-D-ribosyl)imidazole-4-carboxamide: step 1/1. The protein is Bifunctional purine biosynthesis protein PurH of Petrotoga mobilis (strain DSM 10674 / SJ95).